The sequence spans 390 residues: S-adenosylmethionine synthase (390 aa).

Position 15 (histidine 15) interacts with ATP. Residue aspartate 17 participates in Mg(2+) binding. Glutamate 43 lines the K(+) pocket. L-methionine is bound by residues glutamate 56 and glutamine 99. The interval 99–109 (QSPDINQGVDR) is flexible loop. Residues 164-166 (DAK), 230-231 (RF), aspartate 239, 245-246 (RK), alanine 262, and lysine 266 each bind ATP. Aspartate 239 contributes to the L-methionine binding site. Residue lysine 270 coordinates L-methionine.

The protein belongs to the AdoMet synthase family. Homotetramer; dimer of dimers. It depends on Mg(2+) as a cofactor. K(+) serves as cofactor.

The protein localises to the cytoplasm. It carries out the reaction L-methionine + ATP + H2O = S-adenosyl-L-methionine + phosphate + diphosphate. It functions in the pathway amino-acid biosynthesis; S-adenosyl-L-methionine biosynthesis; S-adenosyl-L-methionine from L-methionine: step 1/1. In terms of biological role, catalyzes the formation of S-adenosylmethionine (AdoMet) from methionine and ATP. The overall synthetic reaction is composed of two sequential steps, AdoMet formation and the subsequent tripolyphosphate hydrolysis which occurs prior to release of AdoMet from the enzyme. The chain is S-adenosylmethionine synthase from Photorhabdus laumondii subsp. laumondii (strain DSM 15139 / CIP 105565 / TT01) (Photorhabdus luminescens subsp. laumondii).